We begin with the raw amino-acid sequence, 306 residues long: Natural cytotoxicity triggering receptor 1 (306 aa).

A signal peptide spans 1–21; that stretch reads MSSTLRALLCLGLCLSQRISA. The Extracellular segment spans residues 22-257; sequence PKQTLPKPII…WDHTAQNLLR (236 aa). Ig-like domains lie at 42–100 and 137–192; these read EKQA…SCIY and GEKV…RCFG. Intrachain disulfides connect Cys-49/Cys-98 and Cys-144/Cys-190. The N-linked (GlcNAc...) asparagine glycan is linked to Asn-216. A helical membrane pass occupies residues 258–278; sequence MGLAFLVLVALVCLLVEDWLS. Residues 279-306 are Cytoplasmic-facing; it reads RKRTREQASRASTWEGRRRLNKHKDSEE.

This sequence belongs to the natural cytotoxicity receptor (NCR) family. As to quaternary structure, interacts with CD3Z and FCER1G. Expressed in NK cells.

It localises to the cell membrane. In terms of biological role, cytotoxicity-activating receptor that may contribute to the increased efficiency of activated natural killer (NK) cells to mediate tumor cell lysis. The protein is Natural cytotoxicity triggering receptor 1 (NCR1) of Macaca fascicularis (Crab-eating macaque).